Consider the following 375-residue polypeptide: Protein GOLM2 (375 aa).

Over 1-12 (MVGFGANRRGGR) the chain is Cytoplasmic. The helical; Signal-anchor for type II membrane protein transmembrane segment at 13 to 33 (LPSFLLAALLLVIAVLAFNCW) threads the bilayer. Residues 34–198 (NAASRQAVLR…REQKATQRIQ (165 aa)) adopt a coiled-coil conformation. At 34-375 (NAASRQAVLR…SKPRFGDGVL (342 aa)) the chain is on the lumenal side. Disordered stretches follow at residues 81 to 102 (LEQK…DGQV), 193 to 327 (ATQR…DSQN), and 342 to 375 (RAVG…DGVL). 2 stretches are compositionally biased toward basic and acidic residues: residues 193-204 (ATQRIQSSKDAE) and 350-375 (KQND…DGVL).

The protein belongs to the GOLM family.

Its subcellular location is the membrane. The polypeptide is Protein GOLM2 (GOLM2) (Gallus gallus (Chicken)).